Reading from the N-terminus, the 336-residue chain is Fructose-1,6-bisphosphatase class 1 (336 aa).

Glu-90, Asp-112, Leu-114, and Asp-115 together coordinate Mg(2+). Substrate is bound by residues 115-118, Asn-211, and Lys-277; that span reads DGSS. Residue Glu-283 participates in Mg(2+) binding.

It belongs to the FBPase class 1 family. In terms of assembly, homotetramer. Requires Mg(2+) as cofactor.

Its subcellular location is the cytoplasm. The enzyme catalyses beta-D-fructose 1,6-bisphosphate + H2O = beta-D-fructose 6-phosphate + phosphate. Its pathway is carbohydrate biosynthesis; gluconeogenesis. The polypeptide is Fructose-1,6-bisphosphatase class 1 (Pseudomonas fluorescens (strain Pf0-1)).